Here is a 583-residue protein sequence, read N- to C-terminus: uncharacterized protein (583 aa).

This is an uncharacterized protein from Sinorhizobium fredii (strain NBRC 101917 / NGR234).